The primary structure comprises 339 residues: Centrosomal protein of 41 kDa (339 aa).

A disordered region spans residues 56–99 (RLEDSDSATSEADTDIAAKTNGKGSPEEQSPSPVQFINSTGAGD). 2 positions are modified to phosphoserine: Ser62 and Ser65. Residues 62 to 73 (SATSEADTDIAA) are compositionally biased toward low complexity. Thr75 bears the Phosphothreonine mark. Ser80 and Ser87 each carry phosphoserine. Positions 82-99 (EEQSPSPVQFINSTGAGD) are enriched in polar residues. Residues 135-232 (PDCPFLLLDV…LAQKFPEGLV (98 aa)) enclose the Rhodanese domain. Positions 283–339 (DQGPANNPSRLNQNNSAGRDLKVPAGRGGQNLPTGCPTSHSNSRTLNSGHLQGKPWK) are disordered. Positions 286 to 299 (PANNPSRLNQNNSA) are enriched in polar residues. Arg309 carries the post-translational modification Omega-N-methylarginine. Positions 313-332 (NLPTGCPTSHSNSRTLNSGH) are enriched in polar residues.

The protein belongs to the CEP41 family. Found in a complex with TTLL6.

It localises to the cytoplasm. The protein localises to the cytoskeleton. It is found in the microtubule organizing center. The protein resides in the centrosome. Its subcellular location is the cell projection. It localises to the cilium. The protein localises to the cilium basal body. Required during ciliogenesis for tubulin glutamylation in cilium. Probably acts by participating in the transport of TTLL6, a tubulin polyglutamylase, between the basal body and the cilium. In Rattus norvegicus (Rat), this protein is Centrosomal protein of 41 kDa (Cep41).